A 166-amino-acid chain; its full sequence is Ureidoglycolate lyase (166 aa).

The protein belongs to the ureidoglycolate lyase family. As to quaternary structure, homodimer. Ni(2+) serves as cofactor.

The catalysed reaction is (S)-ureidoglycolate = urea + glyoxylate. The protein operates within nitrogen metabolism; (S)-allantoin degradation. Functionally, catalyzes the catabolism of the allantoin degradation intermediate (S)-ureidoglycolate, generating urea and glyoxylate. Involved in the utilization of allantoin as nitrogen source. In Rhizobium etli (strain ATCC 51251 / DSM 11541 / JCM 21823 / NBRC 15573 / CFN 42), this protein is Ureidoglycolate lyase.